A 429-amino-acid chain; its full sequence is Putative pentatricopeptide repeat-containing protein At1g03510 (429 aa).

10 PPR repeats span residues 11-45 (KLIS…FALP), 47-81 (DAHV…NFLS), 82-112 (NPFV…IPQR), 113-147 (NAVV…PNES), 148-180 (SFNA…RFKP), 181-215 (NLIT…LIEP), 216-246 (HPQL…MEDR), 247-281 (DVVA…KVTP), 282-312 (DDIA…MQGD), and 318-348 (SKDH…MPEK). The segment at 353–428 (TWGALLGACR…SPGSSWCLFK (76 aa)) is type E motif.

It belongs to the PPR family. PCMP-E subfamily.

The protein is Putative pentatricopeptide repeat-containing protein At1g03510 (PCMP-E3) of Arabidopsis thaliana (Mouse-ear cress).